Here is a 93-residue protein sequence, read N- to C-terminus: Large ribosomal subunit protein uL23cz/uL23cy (93 aa).

The protein belongs to the universal ribosomal protein uL23 family. As to quaternary structure, part of the 50S ribosomal subunit.

It localises to the plastid. It is found in the chloroplast. In terms of biological role, binds to 23S rRNA. This chain is Large ribosomal subunit protein uL23cz/uL23cy (rpl23-A), found in Oenothera elata subsp. hookeri (Hooker's evening primrose).